We begin with the raw amino-acid sequence, 451 residues long: Phosphoglucosamine mutase (451 aa).

Residue serine 101 is the Phosphoserine intermediate of the active site. Mg(2+) is bound by residues serine 101, aspartate 240, aspartate 242, and aspartate 244. Phosphoserine is present on serine 101.

Belongs to the phosphohexose mutase family. It depends on Mg(2+) as a cofactor. Activated by phosphorylation.

It catalyses the reaction alpha-D-glucosamine 1-phosphate = D-glucosamine 6-phosphate. Functionally, catalyzes the conversion of glucosamine-6-phosphate to glucosamine-1-phosphate. The sequence is that of Phosphoglucosamine mutase from Streptococcus pyogenes serotype M12 (strain MGAS2096).